Reading from the N-terminus, the 223-residue chain is Transmembrane protein 114 (223 aa).

The chain crosses the membrane as a helical span at residues 7 to 27 (GLAGAAALTGALSFVLLAAAI). N-linked (GlcNAc...) asparagine glycans are attached at residues Asn55 and Asn89. 3 consecutive transmembrane segments (helical) span residues 106–126 (FVIL…TGFL), 134–154 (LLLL…LAGI), and 189–209 (LALG…FLAA).

It belongs to the PMP-22/EMP/MP20 family.

Its subcellular location is the cell junction. The protein resides in the tight junction. The protein localises to the lateral cell membrane. It localises to the apical cell membrane. The sequence is that of Transmembrane protein 114 from Homo sapiens (Human).